Reading from the N-terminus, the 324-residue chain is 3-hydroxyisobutyrate dehydrogenase, mitochondrial (324 aa).

The transit peptide at Met1–Gln25 directs the protein to the mitochondrion. NAD(+) contacts are provided by residues Lys29 to Asp58, Leu92 to Pro93, and Thr121. Lys196 is a catalytic residue. Lys271 is a binding site for NAD(+).

Belongs to the HIBADH-related family. 3-hydroxyisobutyrate dehydrogenase subfamily.

It is found in the mitochondrion. It catalyses the reaction 3-hydroxy-2-methylpropanoate + NAD(+) = 2-methyl-3-oxopropanoate + NADH + H(+). The protein operates within amino-acid degradation; L-valine degradation. The sequence is that of 3-hydroxyisobutyrate dehydrogenase, mitochondrial from Drosophila melanogaster (Fruit fly).